The sequence spans 302 residues: Fluoroacetate dehalogenase (302 aa).

Positions 32-270 (PPLLLLHGFP…LDVWRKWASD (239 aa)) constitute an AB hydrolase-1 domain. The active-site Nucleophile is Asp-110. 5 residues coordinate fluoroacetate: Arg-111, Arg-114, His-155, Trp-156, and Tyr-219. Residue His-280 is the Proton acceptor of the active site.

This sequence belongs to the AB hydrolase superfamily. Epoxide hydrolase family. Homodimer.

The catalysed reaction is a haloacetate + H2O = a halide anion + glycolate + H(+). It carries out the reaction fluoroacetate + H2O = fluoride + glycolate + H(+). The enzyme catalyses chloroacetate + H2O = glycolate + chloride + H(+). Functionally, catalyzes the hydrolytic defluorination of fluoroacetate to produce glycolate. Has lower activity towards chloroacetate and bromoacetate. The polypeptide is Fluoroacetate dehalogenase (Rhodopseudomonas palustris (strain ATCC BAA-98 / CGA009)).